Here is a 1006-residue protein sequence, read N- to C-terminus: uncharacterized protein (1006 aa).

Positions 326 to 371 (EMEKKRPRSPELVPKKIVMEKERPSSPDSEAEEREHNLRIEKERHQ) are disordered. Composition is skewed to basic and acidic residues over residues 338-350 (VPKKIVMEKERPS) and 358-371 (EREHNLRIEKERHQ). 2 coiled-coil regions span residues 358 to 473 (EREH…ARLA) and 756 to 782 (EVQKQRAVDSLNSQYEKERNELDAFGR).

This is an uncharacterized protein from Caenorhabditis elegans.